We begin with the raw amino-acid sequence, 328 residues long: Lipoyl synthase (328 aa).

Residues Cys-56, Cys-61, Cys-67, Cys-82, Cys-86, Cys-89, and Ser-298 each contribute to the [4Fe-4S] cluster site. A Radical SAM core domain is found at 68 to 287; sequence WEDREATFLI…KEEAEEIGFS (220 aa).

This sequence belongs to the radical SAM superfamily. Lipoyl synthase family. [4Fe-4S] cluster serves as cofactor.

It is found in the cytoplasm. It catalyses the reaction [[Fe-S] cluster scaffold protein carrying a second [4Fe-4S](2+) cluster] + N(6)-octanoyl-L-lysyl-[protein] + 2 oxidized [2Fe-2S]-[ferredoxin] + 2 S-adenosyl-L-methionine + 4 H(+) = [[Fe-S] cluster scaffold protein] + N(6)-[(R)-dihydrolipoyl]-L-lysyl-[protein] + 4 Fe(3+) + 2 hydrogen sulfide + 2 5'-deoxyadenosine + 2 L-methionine + 2 reduced [2Fe-2S]-[ferredoxin]. It functions in the pathway protein modification; protein lipoylation via endogenous pathway; protein N(6)-(lipoyl)lysine from octanoyl-[acyl-carrier-protein]: step 2/2. In terms of biological role, catalyzes the radical-mediated insertion of two sulfur atoms into the C-6 and C-8 positions of the octanoyl moiety bound to the lipoyl domains of lipoate-dependent enzymes, thereby converting the octanoylated domains into lipoylated derivatives. In Streptomyces avermitilis (strain ATCC 31267 / DSM 46492 / JCM 5070 / NBRC 14893 / NCIMB 12804 / NRRL 8165 / MA-4680), this protein is Lipoyl synthase.